Reading from the N-terminus, the 291-residue chain is 11-beta-hydroxysteroid dehydrogenase 1 (291 aa).

The Cytoplasmic segment spans residues 1–7 (MAFMKTH). The helical; Signal-anchor for type II membrane protein transmembrane segment at 8 to 24 (LLPILGLFMAYYYYSAY) threads the bilayer. Over 25 to 291 (EEFRPEMLQG…TSYSTDGLIN (267 aa)) the chain is Lumenal. NADP(+) contacts are provided by residues 41-67 (GASKGIGREMAYHLAKMGAHVVVTARS), 92-93 (TM), and 119-121 (NHI). Asparagine 123 and asparagine 162 each carry an N-linked (GlcNAc...) asparagine glycan. Residue serine 170 coordinates substrate. Tyrosine 183 functions as the Proton acceptor in the catalytic mechanism. Residue 183 to 187 (YSASK) coordinates NADP(+). Asparagine 207 carries an N-linked (GlcNAc...) asparagine glycan. Residue 218-222 (IDTDT) coordinates NADP(+).

Belongs to the short-chain dehydrogenases/reductases (SDR) family. Homodimer. In terms of tissue distribution, abundantly expressed in the liver, followed by fibroblasts, also detected in the brain, lung, heart, and ovary, and in smaller amounts in kidney, skin, and spleen.

It localises to the endoplasmic reticulum membrane. It carries out the reaction an 11beta-hydroxysteroid + NADP(+) = an 11-oxosteroid + NADPH + H(+). It catalyses the reaction cortisone + NADPH + H(+) = cortisol + NADP(+). The catalysed reaction is corticosterone + NADP(+) = 11-dehydrocorticosterone + NADPH + H(+). The enzyme catalyses a 7beta-hydroxysteroid + NADP(+) = a 7-oxosteroid + NADPH + H(+). It carries out the reaction 7-oxocholesterol + NADPH + H(+) = 7beta-hydroxycholesterol + NADP(+). It catalyses the reaction chenodeoxycholate + NADP(+) = 7-oxolithocholate + NADPH + H(+). The catalysed reaction is 7-oxolithocholate + NADPH + H(+) = ursodeoxycholate + NADP(+). The enzyme catalyses glycochenodeoxycholate + NADP(+) = 7-oxoglycolithocholate + NADPH + H(+). It carries out the reaction taurochenodeoxycholate + NADP(+) = 7-oxotaurolithocholate + NADPH + H(+). It catalyses the reaction tauroursodeoxycholate + NADP(+) = 7-oxotaurolithocholate + NADPH + H(+). The catalysed reaction is glycoursodeoxycholate + NADP(+) = 7-oxoglycolithocholate + NADPH + H(+). The enzyme catalyses 7-oxopregnenolone + NADPH + H(+) = 7beta-hydroxypregnenolone + NADP(+). It carries out the reaction 3beta,7alpha-dihydroxyandrost-5-en-17-one + NADP(+) = 3beta-hydroxy-5-androstene-7,17-dione + NADPH + H(+). It catalyses the reaction 3beta-hydroxy-5-androstene-7,17-dione + NADPH + H(+) = 3beta,7beta-dihydroxyandrost-5-en-17-one + NADP(+). The catalysed reaction is 3beta-hydroxy-5alpha-androstane-7,17-dione + NADPH + H(+) = 3beta,7beta-dihydroxy-5alpha-androstan-17-one + NADP(+). The protein operates within steroid metabolism. Controls the reversible conversion of biologically active glucocorticoids such as cortisone to cortisol, and 11-dehydrocorticosterone to corticosterone in the presence of NADP(H). Participates in the corticosteroid receptor-mediated anti-inflammatory response, as well as metabolic and homeostatic processes. Bidirectional in vitro, predominantly functions as a reductase in vivo, thereby increasing the concentration of active glucocorticoids. It has broad substrate specificity, besides glucocorticoids, it accepts other steroid and sterol substrates. Interconverts 7-oxo- and 7-hydroxy-neurosteroids such as 7-oxopregnenolone and 7beta-hydroxypregnenolone, 7-oxodehydroepiandrosterone (3beta-hydroxy-5-androstene-7,17-dione) and 7beta-hydroxydehydroepiandrosterone (3beta,7beta-dihydroxyandrost-5-en-17-one), among others. Catalyzes the stereo-specific conversion of the major dietary oxysterol, 7-ketocholesterol (7-oxocholesterol), into the more polar 7-beta-hydroxycholesterol metabolite. 7-oxocholesterol is one of the most important oxysterols, it participates in several events such as induction of apoptosis, accumulation in atherosclerotic lesions, lipid peroxidation, and induction of foam cell formation. Mediates the 7-oxo reduction of 7-oxolithocholate mainly to chenodeoxycholate, and to a lesser extent to ursodeoxycholate, both in its free form and when conjugated to glycine or taurine, providing a link between glucocorticoid activation and bile acid metabolism. Catalyzes the synthesis of 7-beta-25-dihydroxycholesterol from 7-oxo-25-hydroxycholesterol in vitro, which acts as a ligand for the G-protein-coupled receptor (GPCR) Epstein-Barr virus-induced gene 2 (EBI2) and may thereby regulate immune cell migration. This Saimiri sciureus (Common squirrel monkey) protein is 11-beta-hydroxysteroid dehydrogenase 1 (HSD11B1).